We begin with the raw amino-acid sequence, 2542 residues long: Ankyrin repeat and KH domain-containing protein 1 (2542 aa).

Methionine 1 carries the N-acetylmethionine modification. A compositionally biased stretch (gly residues) spans 1 to 10 (MLTDSGGGGT). Disordered stretches follow at residues 1–44 (MLTD…IRTV) and 50–69 (AGPA…SGTG). The segment covering 20-29 (APRSAPAGAS) has biased composition (low complexity). Gly residues predominate over residues 57-69 (GSSGGGGSGSGTG). Phosphoserine occurs at positions 101 and 105. 15 ANK repeats span residues 204-233 (VDTR…SVNE), 237-266 (EGES…NVED), 271-300 (GDIT…DVNS), 304-333 (TGNT…NIED), 337-366 (NGHT…GINT), 371-400 (FKES…DQEH), 404-433 (EMHT…QVNM), 437-466 (SFES…NLEE), 470-499 (EGYT…NINA), 504-533 (TQET…DIEL), 534-563 (GCST…NVHA), 567-596 (TGDT…DLEH), 600-629 (GGRT…NVNR), 634-663 (NDHT…DPTH), and 667-696 (DGST…NVLS). Positions 775–852 (LECIVEETEG…RQLQMKTQQQ (78 aa)) form a coiled coil. Position 803 is a phosphoserine (serine 803). ANK repeat units follow at residues 1054 to 1083 (NHDT…KIEH), 1087 to 1116 (KGFT…DIEA), 1121 to 1150 (TKDT…NKEH), 1154 to 1183 (SDYT…EINS), 1189 to 1218 (LGIS…DINA), 1223 to 1252 (NRNT…NVEH), 1256 to 1285 (TGLT…DVNA), 1291 to 1320 (SRDT…HIDV), 1324 to 1353 (KGNT…DVDA), and 1357 to 1386 (RKIT…QFPS). Residues 1415-1485 (KAKDQQAAEA…ENKPKENSEL (71 aa)) adopt a coiled-coil conformation. Disordered regions lie at residues 1441-1517 (REES…TIGI), 1534-1614 (NVVT…SQEL), and 1632-1664 (SQEE…YKTV). A compositionally biased stretch (basic residues) spans 1453–1463 (REKRKEKRKKK). Over residues 1464–1483 (KEEQKRKQEEDEENKPKENS) the composition is skewed to basic and acidic residues. Residues 1484 to 1502 (ELPEDEDEEENDEDVEQEV) are compositionally biased toward acidic residues. A compositionally biased stretch (low complexity) spans 1503–1517 (PIEPPSATTTTTIGI). At serine 1540 the chain carries Phosphoserine. At threonine 1553 the chain carries Phosphothreonine. Over residues 1590-1603 (NSDSDNLDSTDCNS) the composition is skewed to low complexity. The span at 1604 to 1614 (ESSSGGKSQEL) shows a compositional bias: polar residues. At serine 1632 the chain carries Phosphoserine. The span at 1638-1664 (STATSKTQTRLEGEVTPNSLSTSYKTV) shows a compositional bias: polar residues. The residue at position 1653 (threonine 1653) is a Phosphothreonine. Residues 1695–1759 (RRSKKLSVPA…ESTRYAVQLI (65 aa)) form the KH domain. Disordered stretches follow at residues 1886-1923 (NTWG…VLPS), 1987-2106 (PSVS…APLT), and 2260-2367 (NMHP…IPPP). Residues 1898 to 1922 (PGNTNSSPKHNNTSRLPNQNGTVLP) show a composition bias toward polar residues. Positions 1987–1996 (PSVSSAPITS) are enriched in low complexity. Polar residues predominate over residues 1997–2019 (GQAPTTFLPASTSQAQLSSQKME). The segment covering 2042–2077 (CTPSSTANSCSSSASNTPGAPETHPSSSPTPTSSNT) has biased composition (low complexity). The span at 2078 to 2106 (QEEAQPSSVSDLSPMSMPFASNSEPAPLT) shows a compositional bias: polar residues. 2 stretches are compositionally biased toward low complexity: residues 2285–2308 (LPSI…FSGI) and 2337–2349 (TSAS…APPT).

The protein belongs to the mask family. As to quaternary structure, interacts with PTPN11. Isoform 2 interacts with HIV-1 VPR. Interacts with NOD2. In terms of tissue distribution, ubiquitous with high expression in cervix, spleen and brain. Expressed in hematopoietic cells with increased expression in leukemia cells. Isoform 2 is highly expressed in spleen with almost no expression in muscle and brain.

The protein resides in the cytoplasm. May play a role as a scaffolding protein that may be associated with the abnormal phenotype of leukemia cells. Isoform 2 may possess an antiapoptotic effect and protect cells during normal cell survival through its regulation of caspases. The protein is Ankyrin repeat and KH domain-containing protein 1 (ANKHD1) of Homo sapiens (Human).